Here is a 382-residue protein sequence, read N- to C-terminus: tRNA(Met) cytidine acetate ligase (382 aa).

ATP is bound by residues 7 to 20 (ITEY…HVYH), Gly100, Asn153, and Arg178.

It belongs to the TmcAL family.

It is found in the cytoplasm. The catalysed reaction is cytidine(34) in elongator tRNA(Met) + acetate + ATP = N(4)-acetylcytidine(34) in elongator tRNA(Met) + AMP + diphosphate. Catalyzes the formation of N(4)-acetylcytidine (ac(4)C) at the wobble position of elongator tRNA(Met), using acetate and ATP as substrates. First activates an acetate ion to form acetyladenylate (Ac-AMP) and then transfers the acetyl group to tRNA to form ac(4)C34. The protein is tRNA(Met) cytidine acetate ligase of Staphylococcus carnosus (strain TM300).